Reading from the N-terminus, the 865-residue chain is Alanine--tRNA ligase (865 aa).

Zn(2+) is bound by residues His556, His560, Cys660, and His664.

The protein belongs to the class-II aminoacyl-tRNA synthetase family. The cofactor is Zn(2+).

It is found in the cytoplasm. It carries out the reaction tRNA(Ala) + L-alanine + ATP = L-alanyl-tRNA(Ala) + AMP + diphosphate. Functionally, catalyzes the attachment of alanine to tRNA(Ala) in a two-step reaction: alanine is first activated by ATP to form Ala-AMP and then transferred to the acceptor end of tRNA(Ala). Also edits incorrectly charged Ser-tRNA(Ala) and Gly-tRNA(Ala) via its editing domain. The protein is Alanine--tRNA ligase of Ruthia magnifica subsp. Calyptogena magnifica.